The chain runs to 422 residues: Probable metallocarboxypeptidase A (422 aa).

Positions 1–17 (MRSVLSLALLAVNVVTA) are cleaved as a signal peptide. A propeptide spans 18–112 (AVVAPFDYSG…FEAYSAGYAP (95 aa)) (activation peptide). Positions 119–419 (SYHSYQDHLS…AGTVAMLKAV (301 aa)) constitute a Peptidase M14 domain. His179 and Glu182 together coordinate Zn(2+). Residues 179–182 (HARE), Arg237, and 254–255 (NR) each bind substrate. Cys248 and Cys271 form a disulfide bridge. A Zn(2+)-binding site is contributed by His309. Residue 310-311 (SY) coordinates substrate. The active-site Proton donor/acceptor is the Glu385.

This sequence belongs to the peptidase M14 family. Zn(2+) serves as cofactor.

The protein localises to the secreted. Functionally, extracellular metalloprotease that contributes to pathogenicity. The chain is Probable metallocarboxypeptidase A (MCPA) from Trichophyton verrucosum (strain HKI 0517).